A 358-amino-acid polypeptide reads, in one-letter code: 4-hydroxy-3-methylbut-2-en-1-yl diphosphate synthase (flavodoxin) (358 aa).

The [4Fe-4S] cluster site is built by Cys265, Cys268, Cys300, and Glu307.

The protein belongs to the IspG family. The cofactor is [4Fe-4S] cluster.

It catalyses the reaction (2E)-4-hydroxy-3-methylbut-2-enyl diphosphate + oxidized [flavodoxin] + H2O + 2 H(+) = 2-C-methyl-D-erythritol 2,4-cyclic diphosphate + reduced [flavodoxin]. The protein operates within isoprenoid biosynthesis; isopentenyl diphosphate biosynthesis via DXP pathway; isopentenyl diphosphate from 1-deoxy-D-xylulose 5-phosphate: step 5/6. Functionally, converts 2C-methyl-D-erythritol 2,4-cyclodiphosphate (ME-2,4cPP) into 1-hydroxy-2-methyl-2-(E)-butenyl 4-diphosphate. The chain is 4-hydroxy-3-methylbut-2-en-1-yl diphosphate synthase (flavodoxin) from Maridesulfovibrio salexigens (strain ATCC 14822 / DSM 2638 / NCIMB 8403 / VKM B-1763) (Desulfovibrio salexigens).